Here is a 436-residue protein sequence, read N- to C-terminus: GTPase Der (436 aa).

2 EngA-type G domains span residues 4 to 167 (PTVA…PNEI) and 175 to 351 (IKFS…HAQN). GTP-binding positions include 10-17 (GRPNVGKS), 57-61 (DTGGI), 119-122 (NKVD), 181-188 (GRPNVGKS), 229-233 (DTAGM), and 294-297 (NKWD). The KH-like domain maps to 352–436 (LRISSSVLND…PVHLIARKRK (85 aa)).

This sequence belongs to the TRAFAC class TrmE-Era-EngA-EngB-Septin-like GTPase superfamily. EngA (Der) GTPase family. In terms of assembly, associates with the 50S ribosomal subunit.

In terms of biological role, GTPase that plays an essential role in the late steps of ribosome biogenesis. The protein is GTPase Der of Lactococcus lactis subsp. lactis (strain IL1403) (Streptococcus lactis).